The following is a 493-amino-acid chain: ATP synthase subunit beta, chloroplastic (493 aa).

Residue Gly170–Thr177 participates in ATP binding.

Belongs to the ATPase alpha/beta chains family. F-type ATPases have 2 components, CF(1) - the catalytic core - and CF(0) - the membrane proton channel. CF(1) has five subunits: alpha(3), beta(3), gamma(1), delta(1), epsilon(1). CF(0) has four main subunits: a(1), b(1), b'(1) and c(9-12).

The protein localises to the plastid. Its subcellular location is the chloroplast thylakoid membrane. It carries out the reaction ATP + H2O + 4 H(+)(in) = ADP + phosphate + 5 H(+)(out). In terms of biological role, produces ATP from ADP in the presence of a proton gradient across the membrane. The catalytic sites are hosted primarily by the beta subunits. This is ATP synthase subunit beta, chloroplastic from Adiantum capillus-veneris (Maidenhair fern).